Consider the following 407-residue polypeptide: Succinyl-diaminopimelate desuccinylase (407 aa).

Residues 1 to 10 (MSDIDNNLTS) are compositionally biased toward polar residues. The interval 1–20 (MSDIDNNLTSQTHQQATHQQ) is disordered. Residues 11 to 20 (QTHQQATHQQ) are compositionally biased toward low complexity. Position 93 (His-93) interacts with Zn(2+). Asp-95 is a catalytic residue. A Zn(2+)-binding site is contributed by Asp-126. The Proton acceptor role is filled by Glu-160. 3 residues coordinate Zn(2+): Glu-161, Glu-189, and His-379.

This sequence belongs to the peptidase M20A family. DapE subfamily. In terms of assembly, homodimer. The cofactor is Zn(2+). It depends on Co(2+) as a cofactor.

The catalysed reaction is N-succinyl-(2S,6S)-2,6-diaminopimelate + H2O = (2S,6S)-2,6-diaminopimelate + succinate. The protein operates within amino-acid biosynthesis; L-lysine biosynthesis via DAP pathway; LL-2,6-diaminopimelate from (S)-tetrahydrodipicolinate (succinylase route): step 3/3. Its function is as follows. Catalyzes the hydrolysis of N-succinyl-L,L-diaminopimelic acid (SDAP), forming succinate and LL-2,6-diaminopimelate (DAP), an intermediate involved in the bacterial biosynthesis of lysine and meso-diaminopimelic acid, an essential component of bacterial cell walls. In Psychrobacter arcticus (strain DSM 17307 / VKM B-2377 / 273-4), this protein is Succinyl-diaminopimelate desuccinylase.